Reading from the N-terminus, the 222-residue chain is Large ribosomal subunit protein mL64 (222 aa).

Disordered stretches follow at residues 19 to 46 (APGS…EDLL) and 188 to 222 (KRLK…APSS). The span at 25-36 (YRARPPPRRRPG) shows a compositional bias: basic residues. The stretch at 99–212 (MQESLRVKQL…AAALAAAVAQ (114 aa)) forms a coiled coil. The short motif at 184–200 (KKERKRLKEEKQKRKKE) is the Nuclear localization signal element. The span at 203 to 212 (AAALAAAVAQ) shows a compositional bias: low complexity.

This sequence belongs to the mitochondrion-specific ribosomal protein mL64 family. In terms of assembly, component of the mitochondrial large ribosomal subunit (mt-LSU). Mature mammalian 55S mitochondrial ribosomes consist of a small (28S) and a large (39S) subunit. The 28S small subunit contains a 12S ribosomal RNA (12S mt-rRNA) and 30 different proteins. The 39S large subunit contains a 16S rRNA (16S mt-rRNA), a copy of mitochondrial valine transfer RNA (mt-tRNA(Val)), which plays an integral structural role, and 52 different proteins. Interacts with GADD45A, GADD45B and GADD45G. Interacts with NR4A1 via the NR4A1 AB domain. Interacts with ATAD3A and ATAD3B. As to quaternary structure, (Microbial infection) Interacts with the human papilloma virus type 16 (HPV 16) minor capsid protein L2. Widely expressed. Highly expressed in the thyroid gland, heart, lymph nodes, trachea and adrenal tissues. Expressed at lower level in liver skeletal muscle, kidney, pancreas, testis, ovary and stomach. Barely detectable in adrenal adenoma and papillary thyroid cancer.

It is found in the mitochondrion. The protein resides in the nucleus. Its function is as follows. Acts as a negative regulator of G1 to S cell cycle phase progression by inhibiting cyclin-dependent kinases. Inhibitory effects are additive with GADD45 proteins but also occur in the absence of GADD45 proteins. Acts as a repressor of the orphan nuclear receptor NR4A1 by inhibiting AB domain-mediated transcriptional activity. May be involved in the hormone-mediated regulation of NR4A1 transcriptional activity. May play a role in mitochondrial protein synthesis. The sequence is that of Large ribosomal subunit protein mL64 (GADD45GIP1) from Homo sapiens (Human).